Here is a 137-residue protein sequence, read N- to C-terminus: S-protein homolog 16 (137 aa).

An N-terminal signal peptide occupies residues 1 to 21; it reads MKNLLVFIFVFSLCMFDHVSG. Asn87 carries an N-linked (GlcNAc...) asparagine glycan.

This sequence belongs to the plant self-incompatibility (S1) protein family.

The protein localises to the secreted. In Arabidopsis thaliana (Mouse-ear cress), this protein is S-protein homolog 16.